The sequence spans 316 residues: Probable cell division protein WhiA (316 aa).

The segment at residues Thr275 to Ala309 is a DNA-binding region (H-T-H motif).

Belongs to the WhiA family.

In terms of biological role, involved in cell division and chromosome segregation. This chain is Probable cell division protein WhiA, found in Bacillus cereus (strain G9842).